Consider the following 115-residue polypeptide: Potassium-transporting ATPase potassium-binding subunit (115 aa).

A run of 2 helical transmembrane segments spans residues 8-28 (YFLL…VAFF) and 60-80 (SYCT…YGLL).

The protein belongs to the KdpA family. The system is composed of three essential subunits: KdpA, KdpB and KdpC.

The protein localises to the cell membrane. Functionally, part of the high-affinity ATP-driven potassium transport (or Kdp) system, which catalyzes the hydrolysis of ATP coupled with the electrogenic transport of potassium into the cytoplasm. This subunit binds the extracellular potassium ions and delivers the ions to the membrane domain of KdpB through an intramembrane tunnel. This chain is Potassium-transporting ATPase potassium-binding subunit, found in Geobacillus stearothermophilus (Bacillus stearothermophilus).